We begin with the raw amino-acid sequence, 749 residues long: Transcription factor RFX3 (749 aa).

A DNA-binding region (RFX-type winged-helix) is located at residues 183 to 258 (HLQWLLDNYE…YHYYGIRVKP (76 aa)).

Belongs to the RFX family.

The protein localises to the nucleus. Its function is as follows. Transcription factor required for ciliogenesis and islet cell differentiation during endocrine pancreas development. The chain is Transcription factor RFX3 (rfx3) from Xenopus tropicalis (Western clawed frog).